The chain runs to 90 residues: Probable Fe(2+)-trafficking protein (90 aa).

The protein belongs to the Fe(2+)-trafficking protein family.

Could be a mediator in iron transactions between iron acquisition and iron-requiring processes, such as synthesis and/or repair of Fe-S clusters in biosynthetic enzymes. The protein is Probable Fe(2+)-trafficking protein of Vibrio atlanticus (strain LGP32) (Vibrio splendidus (strain Mel32)).